Reading from the N-terminus, the 390-residue chain is Argininosuccinate synthase (390 aa).

An ATP-binding site is contributed by 6–14 (AYSGGLDTT). Tyrosine 84 contacts L-citrulline. An ATP-binding site is contributed by glycine 114. L-aspartate is bound by residues threonine 116, asparagine 120, and aspartate 121. Position 120 (asparagine 120) interacts with L-citrulline. Arginine 124, serine 171, serine 180, glutamate 253, and tyrosine 265 together coordinate L-citrulline.

Belongs to the argininosuccinate synthase family. Type 1 subfamily. As to quaternary structure, homotetramer.

It is found in the cytoplasm. The enzyme catalyses L-citrulline + L-aspartate + ATP = 2-(N(omega)-L-arginino)succinate + AMP + diphosphate + H(+). It participates in amino-acid biosynthesis; L-arginine biosynthesis; L-arginine from L-ornithine and carbamoyl phosphate: step 2/3. This is Argininosuccinate synthase from Sulfurisphaera tokodaii (strain DSM 16993 / JCM 10545 / NBRC 100140 / 7) (Sulfolobus tokodaii).